A 266-amino-acid polypeptide reads, in one-letter code: Interleukin-1 beta (266 aa).

Residues 1–113 constitute a propeptide that is removed on maturation; it reads MATVPEPINE…ETSSDELLCD (113 aa).

It belongs to the IL-1 family. Monomer. In its precursor form, weakly interacts with full-length MEFV; the mature cytokine does not interact at all. Interacts with integrins ITGAV:ITGBV and ITGA5:ITGB1; integrin-binding is required for IL1B signaling. Interacts with cargo receptor TMED10; the interaction is direct and is required for the secretion of IL1B mature form. Interacts with HSP90AB1; the interaction facilitates cargo translocation into the ERGIC. Interacts with HSP90B1; the interaction facilitates cargo translocation into the ERGIC.

It is found in the cytoplasm. The protein localises to the cytosol. The protein resides in the secreted. Its subcellular location is the lysosome. It localises to the extracellular exosome. Potent pro-inflammatory cytokine. Initially discovered as the major endogenous pyrogen, induces prostaglandin synthesis, neutrophil influx and activation, T-cell activation and cytokine production, B-cell activation and antibody production, and fibroblast proliferation and collagen production. Promotes Th17 differentiation of T-cells. Synergizes with IL12/interleukin-12 to induce IFNG synthesis from T-helper 1 (Th1) cells. Plays a role in angiogenesis by inducing VEGF production synergistically with TNF and IL6. Involved in transduction of inflammation downstream of pyroptosis: its mature form is specifically released in the extracellular milieu by passing through the gasdermin-D (GSDMD) pore. The chain is Interleukin-1 beta (IL1B) from Capra hircus (Goat).